Here is a 143-residue protein sequence, read N- to C-terminus: Snake venom vascular endothelial growth factor toxin (143 aa).

A signal peptide spans 1–24 (MAVYLLAVAILFCIQGWPSGTVQG). The residue at position 25 (Glu25) is a Pyrrolidone carboxylic acid (Glu). Cystine bridges form between Cys38/Cys80, Cys69/Cys115, and Cys73/Cys117. The tract at residues 117-143 (CRPRSPGDVNDGRNPKEGEPRARFPFV) is disordered.

It belongs to the PDGF/VEGF growth factor family. Snake venom VEGF subfamily. Homodimer; disulfide-linked. Interacts with VEGF receptor-1 (FLT1) with a high affinity, whereas it binds to VEGF receptor-2 (KDR) with a low affinity. Does not bind to VEGFR-3/FLT4 and neuropilin-1 (NRP1). In terms of tissue distribution, expressed by the venom gland.

The protein localises to the secreted. In terms of biological role, snake venom VEGFs may contribute to venom dispersion and prey subjugation by inducing vascular permeability and hypotension. This protein activates the vascular endothelial growth factor receptor-1 (VEGFR-1/FLT1), and consequently promotes the proliferation and tissue factor production of endothelial cells, the neovascularization in the chicken chorioallantoic membrane, and increases vascular permeability. Also stimulates tissue-factor production and human monocyte chemotaxis. The sequence is that of Snake venom vascular endothelial growth factor toxin from Protobothrops mucrosquamatus (Taiwan habu).